The primary structure comprises 101 residues: Small ribosomal subunit protein uS14A (101 aa).

2 disordered regions span residues Met-1–Ala-21 and Gln-49–Thr-73. Basic and acidic residues-rich tracts occupy residues Ala-8–Ala-21 and Arg-61–Pro-70.

This sequence belongs to the universal ribosomal protein uS14 family. Part of the 30S ribosomal subunit. Contacts proteins S3 and S10.

Binds 16S rRNA, required for the assembly of 30S particles and may also be responsible for determining the conformation of the 16S rRNA at the A site. In Kineococcus radiotolerans (strain ATCC BAA-149 / DSM 14245 / SRS30216), this protein is Small ribosomal subunit protein uS14A.